The following is a 123-amino-acid chain: Small ribosomal subunit protein bS16 (123 aa).

A disordered region spans residues 79–123 (AGIAKRPSRNNPTKGEPGKKAQERLALAKQAEEEAAAKAAEAASE).

Belongs to the bacterial ribosomal protein bS16 family.

This is Small ribosomal subunit protein bS16 from Brucella melitensis biotype 2 (strain ATCC 23457).